The following is a 256-amino-acid chain: uncharacterized protein (256 aa).

Residues Ile18, Ser37, Lys46, Asp66, Tyr164, Lys168, Val197, and Thr199 each contribute to the NADP(+) site. Tyr164 functions as the Proton donor in the catalytic mechanism. Lys168 (lowers pKa of active site Tyr) is an active-site residue.

It belongs to the short-chain dehydrogenases/reductases (SDR) family.

It is found in the cytoplasm. This is an uncharacterized protein from Saccharomyces cerevisiae (strain ATCC 204508 / S288c) (Baker's yeast).